The chain runs to 530 residues: Bifunctional purine biosynthesis protein PurH (530 aa).

In terms of domain architecture, MGS-like spans 1-148; it reads MEQARPIRRA…KNHKDVAIVV (148 aa).

Belongs to the PurH family.

The catalysed reaction is (6R)-10-formyltetrahydrofolate + 5-amino-1-(5-phospho-beta-D-ribosyl)imidazole-4-carboxamide = 5-formamido-1-(5-phospho-D-ribosyl)imidazole-4-carboxamide + (6S)-5,6,7,8-tetrahydrofolate. It carries out the reaction IMP + H2O = 5-formamido-1-(5-phospho-D-ribosyl)imidazole-4-carboxamide. It participates in purine metabolism; IMP biosynthesis via de novo pathway; 5-formamido-1-(5-phospho-D-ribosyl)imidazole-4-carboxamide from 5-amino-1-(5-phospho-D-ribosyl)imidazole-4-carboxamide (10-formyl THF route): step 1/1. It functions in the pathway purine metabolism; IMP biosynthesis via de novo pathway; IMP from 5-formamido-1-(5-phospho-D-ribosyl)imidazole-4-carboxamide: step 1/1. The chain is Bifunctional purine biosynthesis protein PurH from Aeromonas salmonicida (strain A449).